Consider the following 757-residue polypeptide: Elongation factor G, mitochondrial (757 aa).

Residues 1 to 39 (MLLVPRVPVVMQGKCGLLKISRPLQGSLSRGFHFSRAHR) constitute a mitochondrion transit peptide. The tr-type G domain occupies 65-346 (QKLRNIGISA…AIVDYLPNPS (282 aa)). Residues 74-81 (AHIDSGKT), 145-149 (DTPGH), and 199-202 (NKMD) each bind GTP.

This sequence belongs to the TRAFAC class translation factor GTPase superfamily. Classic translation factor GTPase family. EF-G/EF-2 subfamily.

It is found in the mitochondrion. Its pathway is protein biosynthesis; polypeptide chain elongation. Mitochondrial GTPase that catalyzes the GTP-dependent ribosomal translocation step during translation elongation. During this step, the ribosome changes from the pre-translocational (PRE) to the post-translocational (POST) state as the newly formed A-site-bound peptidyl-tRNA and P-site-bound deacylated tRNA move to the P and E sites, respectively. Catalyzes the coordinated movement of the two tRNA molecules, the mRNA and conformational changes in the ribosome. This is Elongation factor G, mitochondrial from Candida glabrata (strain ATCC 2001 / BCRC 20586 / JCM 3761 / NBRC 0622 / NRRL Y-65 / CBS 138) (Yeast).